Consider the following 1377-residue polypeptide: Protein RhsA (1377 aa).

28 repeat units span residues 330–352, 353–374, 375–417, 418–438, 439–460, 461–481, 482–502, 503–525, 526–546, 547–567, 568–588, 589–609, 610–629, 630–650, 651–671, 672–691, 692–711, 712–734, 735–758, 808–828, 829–850, 851–871, 872–894, 895–930, 931–959, 960–984, 985–1019, and 1162–1186. The segment at 330–1186 is 28 X approximate tandem repeats; sequence GKQVRSFTYD…LNEENPHQLQ (857 aa). The segment at 1356–1377 is disordered; sequence DAKSTQKAWNCRHSRQSNDKKR.

It belongs to the RHS family.

Rhs elements have a nonessential function. They may play an important role in the natural ecology of the cell. The chain is Protein RhsA (rhsA) from Escherichia coli (strain K12).